Consider the following 270-residue polypeptide: Replication protein A 32 kDa subunit (270 aa).

Met1 is modified (N-acetylmethionine). Residues Ser4 and Ser8 each carry the phosphoserine; by PRKDC modification. A disordered region spans residues 20-41 (YTQSPGGFGSPTPSQAEKKSRV). A Phosphothreonine; by PRKDC modification is found at Thr21. Ser23 is subject to Phosphoserine; by CDK2. Ser29 is modified (phosphoserine; by CDK1). Ser33 is subject to Phosphoserine; by PRKDC. Residues Lys37 and Lys38 each participate in a glycyl lysine isopeptide (Lys-Gly) (interchain with G-Cter in ubiquitin) cross-link. A DNA-binding region (OB) is located at residues 74–148 (VTIVGIIRHA…KSLVAFKIIP (75 aa)). Residues 171-192 (KPNSQASAGRPSMSNPGMSEPG) form a disordered region. The segment at 187-270 (GMSEPGNFSG…DDHFKSTDAE (84 aa)) is interaction with RAD52, TIPIN, UNG and XPA.

It belongs to the replication factor A protein 2 family. Component of the replication protein A complex (RPA/RP-A), a heterotrimeric complex composed of RPA1, RPA2 and RPA3. Interacts with PRPF19; the PRP19-CDC5L complex is recruited to the sites of DNA repair where it ubiquitinates the replication protein A complex (RPA). Interacts with SERTAD3. Interacts with TIPIN. Interacts with TIMELESS. Interacts with PPP4R2; the interaction is direct, DNA damage-dependent and mediates the recruitment of the PP4 catalytic subunit PPP4C. Interacts (hyperphosphorylated) with RAD51. Interacts with SMARCAL1; the interaction is direct and mediates the recruitment to the RPA complex of SMARCAL1. Interacts with RAD52 and XPA; those interactions are direct and associate RAD52 and XPA to the RPA complex. Interacts with FBH1. Interacts with ETAA1; the interaction is direct and promotes ETAA1 recruitment at stalled replication forks. Interacts with DDI2. Interacts (in unphosphorylated form via N-terminus) with EIF4EBP3; the interaction enhances EIF4EBP3-mediated inhibition of EIF4E-mediated mRNA nuclear export. Interacts with nuclear UNG (isoform 2); this interaction mediates UNG recruitment to RPA-coated single-stranded DNA at stalled replication forks. Post-translationally, differentially phosphorylated throughout the cell cycle, becoming phosphorylated at the G1-S transition and dephosphorylated in late mitosis. Mainly phosphorylated at Ser-23 and Ser-29, by cyclin A-CDK2 and cyclin B-CDK1, respectively during DNA replication and mitosis. Dephosphorylation may require the serine/threonine-protein phosphatase 4. Phosphorylation at Ser-23 and Ser-29 is a prerequisite for further phosphorylation. Becomes hyperphosphorylated on additional residues including Ser-4, Ser-8, Thr-21 and Ser-33 in response to DNA damage. Hyperphosphorylation is mediated by ATM, ATR and PRKDC. Primarily recruited to DNA repair nuclear foci as a hypophosphorylated form it undergoes subsequent hyperphosphorylation, catalyzed by ATR. Hyperphosphorylation is required for RAD51 recruitment to chromatin and efficient DNA repair. Phosphorylation at Thr-21 depends upon RFWD3 presence. In terms of processing, DNA damage-induced 'Lys-63'-linked polyubiquitination by PRPF19 mediates ATRIP recruitment to the RPA complex at sites of DNA damage and activation of ATR. Ubiquitinated by RFWD3 at stalled replication forks in response to DNA damage: ubiquitination by RFWD3 does not lead to degradation by the proteasome and promotes removal of the RPA complex from stalled replication forks, promoting homologous recombination.

It localises to the nucleus. The protein localises to the PML body. In terms of biological role, as part of the heterotrimeric replication protein A complex (RPA/RP-A), binds and stabilizes single-stranded DNA intermediates, that form during DNA replication or upon DNA stress. It prevents their reannealing and in parallel, recruits and activates different proteins and complexes involved in DNA metabolism. Thereby, it plays an essential role both in DNA replication and the cellular response to DNA damage. In the cellular response to DNA damage, the RPA complex controls DNA repair and DNA damage checkpoint activation. Through recruitment of ATRIP activates the ATR kinase a master regulator of the DNA damage response. It is required for the recruitment of the DNA double-strand break repair factors RAD51 and RAD52 to chromatin in response to DNA damage. Also recruits to sites of DNA damage proteins like XPA and XPG that are involved in nucleotide excision repair and is required for this mechanism of DNA repair. Also plays a role in base excision repair (BER) probably through interaction with UNG. Also recruits SMARCAL1/HARP, which is involved in replication fork restart, to sites of DNA damage. May also play a role in telomere maintenance. This is Replication protein A 32 kDa subunit from Mus musculus (Mouse).